Consider the following 212-residue polypeptide: Nuclear transcription factor Y subunit C-7 (212 aa).

A compositionally biased stretch (polar residues) spans 1 to 10 (MEENNGNNNH). Disordered regions lie at residues 1-23 (MEENNGNNNHYLPQPSSSQLPPP) and 190-212 (EWPAVPGDGEEAAGEIGGSSGGN).

Belongs to the NFYC/HAP5 subunit family. Heterotrimeric transcription factor composed of three components, NF-YA, NF-YB and NF-YC. NF-YB and NF-YC must interact and dimerize for NF-YA association and DNA binding. As to expression, expressed in flowers.

The protein resides in the nucleus. In terms of biological role, stimulates the transcription of various genes by recognizing and binding to a CCAAT motif in promoters. The sequence is that of Nuclear transcription factor Y subunit C-7 (NFYC7) from Arabidopsis thaliana (Mouse-ear cress).